A 243-amino-acid chain; its full sequence is UPF0246 protein SEQ_2141 (243 aa).

Belongs to the UPF0246 family.

The polypeptide is UPF0246 protein SEQ_2141 (Streptococcus equi subsp. equi (strain 4047)).